The primary structure comprises 305 residues: Homoserine kinase (305 aa).

ATP is bound at residue 93 to 103 (PLARGLGSSAT).

Belongs to the GHMP kinase family. Homoserine kinase subfamily.

The protein resides in the cytoplasm. The catalysed reaction is L-homoserine + ATP = O-phospho-L-homoserine + ADP + H(+). It participates in amino-acid biosynthesis; L-threonine biosynthesis; L-threonine from L-aspartate: step 4/5. In terms of biological role, catalyzes the ATP-dependent phosphorylation of L-homoserine to L-homoserine phosphate. This is Homoserine kinase from Trichodesmium erythraeum (strain IMS101).